The chain runs to 92 residues: UPF0250 protein XOO3732 (92 aa).

The protein belongs to the UPF0250 family.

The polypeptide is UPF0250 protein XOO3732 (Xanthomonas oryzae pv. oryzae (strain MAFF 311018)).